The following is a 236-amino-acid chain: MINFEATELRLGLPGGNHGGEMAGKNNGKRGFSETVDLKLNLSSTAMDSVSKVDLENMKEKVVKPPAKAQVVGWPPVRSFRKNVMSGQKPTTGDATEGNDKTSGSSGATSSASACATVAYVKVSMDGAPYLRKIDLKLYKTYQDLSNALSKMFSSFTIGNYGPQGMKDFMNESKLIDLLNGSDYVPTYEDKDGDWMLVGDVPWEMFVDSCKRIRIMKGSEAIGLAPRALEKCKNRS.

Positions 9-13 match the EAR-like (transcriptional repression) motif; sequence LRLGL. The tract at residues 82–110 is disordered; that stretch reads KNVMSGQKPTTGDATEGNDKTSGSSGATS. Over residues 85–94 the composition is skewed to polar residues; the sequence is MSGQKPTTGD. The PB1 domain maps to 118-218; sequence VAYVKVSMDG…SCKRIRIMKG (101 aa).

The protein belongs to the Aux/IAA family. As to quaternary structure, homodimers and heterodimers.

The protein resides in the nucleus. Aux/IAA proteins are short-lived transcriptional factors that function as repressors of early auxin response genes at low auxin concentrations. Repression is thought to result from the interaction with auxin response factors (ARFs), proteins that bind to the auxin-responsive promoter element (AuxRE). Formation of heterodimers with ARF proteins may alter their ability to modulate early auxin response genes expression. The chain is Auxin-responsive protein IAA16 (IAA16) from Arabidopsis thaliana (Mouse-ear cress).